A 152-amino-acid polypeptide reads, in one-letter code: Deoxyuridine 5'-triphosphate nucleotidohydrolase (152 aa).

Substrate-binding positions include 62–64 (RSG), Asn-75, and 79–81 (TVD).

Belongs to the dUTPase family. It depends on Mg(2+) as a cofactor.

The catalysed reaction is dUTP + H2O = dUMP + diphosphate + H(+). It functions in the pathway pyrimidine metabolism; dUMP biosynthesis; dUMP from dCTP (dUTP route): step 2/2. Its function is as follows. This enzyme is involved in nucleotide metabolism: it produces dUMP, the immediate precursor of thymidine nucleotides and it decreases the intracellular concentration of dUTP so that uracil cannot be incorporated into DNA. In Leifsonia xyli subsp. xyli (strain CTCB07), this protein is Deoxyuridine 5'-triphosphate nucleotidohydrolase.